The primary structure comprises 228 residues: uncharacterized protein (228 aa).

One can recognise an HTH gntR-type domain in the interval 11 to 78 (PPVNQQIYRI…PQRGSYVNKI (68 aa)). A DNA-binding region (H-T-H motif) is located at residues 38 to 57 (EKEVSVRFNVSRQPVREAFI).

This is an uncharacterized protein from Escherichia coli O6:H1 (strain CFT073 / ATCC 700928 / UPEC).